Consider the following 40-residue polypeptide: 67 kDa serum albumin (40 aa).

An Albumin domain is found at 1 to 40; the sequence is DAEHKSEIVHRFNDLKEEKFKGAALITFAQFLHKKPEEEA. His4 lines the Cu cation pocket.

Belongs to the ALB/AFP/VDB family. As to expression, plasma.

The protein localises to the secreted. Functionally, serum albumin, the main protein of plasma, has a good binding capacity for water, Ca(2+), Na(+), K(+), fatty acids, hormones, bilirubin and drugs. Its main function is the regulation of the colloidal osmotic pressure of blood. This is 67 kDa serum albumin from Trachemys scripta (Red-eared slider turtle).